The following is a 1023-amino-acid chain: 2-oxoglutarate dehydrogenase complex component E1 (1023 aa).

A mitochondrion-targeting transit peptide spans Met-1–Tyr-40. Lys-74 is modified (N6-succinyllysine). The residue at position 100 (Ser-100) is a Phosphoserine. Ca(2+) contacts are provided by His-143, Asp-156, and Asp-158. Arg-312 contacts thiamine diphosphate. N6-acetyllysine is present on Lys-401. Residues Asp-411, Asn-444, and Ile-446 each contribute to the thiamine diphosphate site. Mg(2+) contacts are provided by Asp-411, Asn-444, and Ile-446. Lys-534 is covalently cross-linked (Glycyl lysine isopeptide (Lys-Gly) (interchain with G-Cter in ubiquitin)). Lys-564 carries the N6-succinyllysine modification. Thiamine diphosphate is bound at residue Gln-676. Lys-970 bears the N6-acetyllysine mark.

It belongs to the alpha-ketoglutarate dehydrogenase family. Homodimer. The 2-oxoglutarate dehydrogenase complex is composed of OGDH (2-oxoglutarate dehydrogenase; E1), DLST (dihydrolipoamide succinyltransferase; E2), DLD (dihydrolipoamide dehydrogenase; E3) and the assembly factor KGD4. It contains multiple copies of the three enzymatic components (E1, E2 and E3). In the nucleus, the 2-oxoglutarate dehydrogenase complex associates with KAT2A. Interacts with ABHD11; this interaction maintains the functional lipoylation of the 2-oxoglutarate dehydrogenase complex. The cofactor is thiamine diphosphate. Mg(2+) is required as a cofactor.

Its subcellular location is the mitochondrion. It localises to the nucleus. The catalysed reaction is N(6)-[(R)-lipoyl]-L-lysyl-[protein] + 2-oxoglutarate + H(+) = N(6)-[(R)-S(8)-succinyldihydrolipoyl]-L-lysyl-[protein] + CO2. With respect to regulation, calcium ions and ADP stimulate, whereas ATP and NADH reduce catalytic activity. 2-oxoglutarate dehydrogenase (E1o) component of the 2-oxoglutarate dehydrogenase complex (OGDHC). Participates in the first step, rate limiting for the overall conversion of 2-oxoglutarate to succinyl-CoA and CO(2) catalyzed by the whole OGDHC. Catalyzes the irreversible decarboxylation of 2-oxoglutarate (alpha-ketoglutarate) via the thiamine diphosphate (ThDP) cofactor and subsequent transfer of the decarboxylated acyl intermediate on an oxidized dihydrolipoyl group that is covalently amidated to the E2 enzyme (dihydrolipoyllysine-residue succinyltransferase or DLST). Plays a key role in the Krebs (citric acid) cycle, which is a common pathway for oxidation of fuel molecules, including carbohydrates, fatty acids, and amino acids. Can catalyze the decarboxylation of 2-oxoadipate in vitro, but at a much lower rate than 2-oxoglutarate. Mainly active in the mitochondrion. A fraction of the 2-oxoglutarate dehydrogenase complex also localizes in the nucleus and is required for lysine succinylation of histones: associates with KAT2A on chromatin and provides succinyl-CoA to histone succinyltransferase KAT2A. The polypeptide is 2-oxoglutarate dehydrogenase complex component E1 (Macaca fascicularis (Crab-eating macaque)).